The sequence spans 244 residues: Phosphoadenosine 5'-phosphosulfate reductase (244 aa).

The active-site Nucleophile; cysteine thiosulfonate intermediate is cysteine 239.

The protein belongs to the PAPS reductase family. CysH subfamily.

It is found in the cytoplasm. The enzyme catalyses [thioredoxin]-disulfide + sulfite + adenosine 3',5'-bisphosphate + 2 H(+) = [thioredoxin]-dithiol + 3'-phosphoadenylyl sulfate. Its pathway is sulfur metabolism; hydrogen sulfide biosynthesis; sulfite from sulfate: step 3/3. Functionally, catalyzes the formation of sulfite from phosphoadenosine 5'-phosphosulfate (PAPS) using thioredoxin as an electron donor. This Salmonella dublin (strain CT_02021853) protein is Phosphoadenosine 5'-phosphosulfate reductase.